A 476-amino-acid chain; its full sequence is CBL-interacting protein kinase 30 (476 aa).

The Protein kinase domain maps to 17 to 272; that stretch reads YKLGRLLGRG…ISKIMDRPWF (256 aa). ATP is bound by residues 23 to 31 and Lys-46; that span reads LGRGTFAKV. Asp-140 functions as the Proton acceptor in the catalytic mechanism. The segment at 158–187 is activation loop; the sequence is DFGLSALDGGLRGDGLLHTTCGTPAYVAPE. The segment at 296–315 is disordered; sequence KEASQQHDDEEDDGFAREKK. Residues 299 to 353 enclose the NAF domain; sequence SQQHDDEEDDGFAREKKKRSNVIMSSPVIDVRPSSMNAFDIISRSRGLDLSKMFD. Positions 358 to 387 are PPI; sequence RSEARFSTRETTTAIVSKLEEIAEAGRFSF.

Belongs to the protein kinase superfamily. CAMK Ser/Thr protein kinase family. SNF1 subfamily. Mn(2+) serves as cofactor.

The catalysed reaction is L-seryl-[protein] + ATP = O-phospho-L-seryl-[protein] + ADP + H(+). It carries out the reaction L-threonyl-[protein] + ATP = O-phospho-L-threonyl-[protein] + ADP + H(+). Functionally, CIPK serine-threonine protein kinases interact with CBL proteins. Binding of a CBL protein to the regulatory NAF domain of CIPK protein lead to the activation of the kinase in a calcium-dependent manner. In Oryza sativa subsp. japonica (Rice), this protein is CBL-interacting protein kinase 30 (CIPK30).